The sequence spans 570 residues: Frizzled-2 (570 aa).

Positions 1 to 28 (MRARSALPRSALPRLLLPLLLLPAAGPA) are cleaved as a signal peptide. The Extracellular segment spans residues 29–252 (QFHGEKGISI…HHHTRFARLW (224 aa)). Residues 39 to 158 (PDHGFCQPIS…HGAEQICVGQ (120 aa)) form the FZ domain. 5 cysteine pairs are disulfide-bonded: cysteine 44–cysteine 105, cysteine 52–cysteine 98, cysteine 89–cysteine 126, cysteine 115–cysteine 155, and cysteine 119–cysteine 143. N-linked (GlcNAc...) asparagine glycosylation occurs at asparagine 58. Asparagine 159 is a glycosylation site (N-linked (GlcNAc...) asparagine). A disordered region spans residues 166–194 (PALLTTAPPSGLQPGAGGTPGGPGGGGAP). Gly residues predominate over residues 179 to 193 (PGAGGTPGGPGGGGA). A helical transmembrane segment spans residues 253-273 (ILTWSVLCCASTFFTVTTSLV). Topologically, residues 274–284 (AMQRFRYPERP) are cytoplasmic. A helical membrane pass occupies residues 285-305 (IIFLSGCYTMVSVAYIAGFVL). Residues 306 to 332 (QERVVCNERFSEDGYRTVGQGTKKEGC) are Extracellular-facing. Residues 333–353 (TILFMMLYFFSMASSIWWVIL) form a helical membrane-spanning segment. Over 354–375 (SLTWFLAAGMKWGHAAIEANSQ) the chain is Cytoplasmic. Residues 376–396 (YFHLAAWAVPAVKTITILAMG) traverse the membrane as a helical segment. The Extracellular segment spans residues 397-419 (QIDGDLLSGVCFVGLNRLDPLRG). Residues 420-440 (FVLAPLFVYLFIGTSFLLAGF) form a helical membrane-spanning segment. The Cytoplasmic segment spans residues 441–466 (VSLFRIRTIMKHDGTKTEPLERLMVR). A helical transmembrane segment spans residues 467–487 (IGVFSVLYTVPATIVIACYFY). Residues 488–524 (EQAFREHWERSWVSQHCKSLAIPCPAHYTPRTSPDFT) are Extracellular-facing. A helical membrane pass occupies residues 525 to 545 (VYMIKYLMTLIVGITSGFWIW). Over 546–570 (SGKTLHSWRKFYTRLTNSRHGETTV) the chain is Cytoplasmic. Residues 548 to 553 (KTLHSW) carry the Lys-Thr-X-X-X-Trp motif, mediates interaction with the PDZ domain of Dvl family members motif. Positions 568–570 (TTV) match the PDZ-binding motif.

The protein belongs to the G-protein coupled receptor Fz/Smo family. Post-translationally, ubiquitinated by ZNRF3, leading to its degradation by the proteasome. As to expression, widely expressed. Most abundant in kidney, liver, uterus, ovary and heart. Lower levels seen in brain and intestine. Extremely low in calvaria, mammary glands and testis.

It is found in the membrane. It localises to the cell membrane. In terms of biological role, receptor for Wnt proteins. Most of frizzled receptors are coupled to the beta-catenin canonical signaling pathway, which leads to the activation of disheveled proteins, inhibition of GSK-3 kinase, nuclear accumulation of beta-catenin and activation of Wnt target genes. A second signaling pathway involving PKC and calcium fluxes has been seen for some family members, but it is not yet clear if it represents a distinct pathway or if it can be integrated in the canonical pathway, as PKC seems to be required for Wnt-mediated inactivation of GSK-3 kinase. Both pathways seem to involve interactions with G-proteins. May be involved in transduction and intercellular transmission of polarity information during tissue morphogenesis and/or in differentiated tissues. Activation by Wnt5A stimulates PKC activity via a G-protein-dependent mechanism. This Rattus norvegicus (Rat) protein is Frizzled-2 (Fzd2).